We begin with the raw amino-acid sequence, 216 residues long: UPF0502 protein Smal_0052 (216 aa).

It belongs to the UPF0502 family.

The sequence is that of UPF0502 protein Smal_0052 from Stenotrophomonas maltophilia (strain R551-3).